Reading from the N-terminus, the 399-residue chain is MLAEKTRSIIKATVPVLEQQGTVITRTFYKNMLTEHTELLNIFNRTNQKVGAQPNALATTVLAAAKNIDDLSVLMDHVKQIGHKHRALQIKPEHYPIVGEYLLKAIKEVLGDAATPEIINAWGEAYQAIADIFITVEKKMYEEALWPGWKPFDITAKEYVASDIVEFTVKPKFGSGIELESLPITPGQYITVNTHPIRQENQYDALRHYSLCSASTKNGLRFAVKMEAARENFPAGLVSEYLHKDAKVGDEIKLSAPAGDFAINKELIHQNEVPLVLLSSGVGVTPLLAMLEEQVKCNPNRPIYWIQSSYDEKTQAFKKHVDELLAECANVDKIIVHTDTEPLINAAFLKEKSPAHADVYTCGSLAFMQAMIGHLKELEHRDDMIHYEPFGPKMSTVQV.

In terms of domain architecture, Globin spans 1–138; it reads MLAEKTRSII…IADIFITVEK (138 aa). At Thr22 the chain carries Phosphothreonine. His85 is a heme b binding site. Residues Tyr95 and Glu137 each act as charge relay system in the active site. The segment at 146 to 399 is reductase; it reads WPGWKPFDIT…FGPKMSTVQV (254 aa). Residues 147–264 form the FAD-binding FR-type domain; sequence PGWKPFDITA…SAPAGDFAIN (118 aa). FAD is bound by residues Tyr189 and 207–210; that span reads RHYS. 281 to 286 lines the NADP(+) pocket; the sequence is GVGVTP. Residue 389–392 participates in FAD binding; that stretch reads PFGP.

Belongs to the globin family. Two-domain flavohemoproteins subfamily. The protein in the C-terminal section; belongs to the flavoprotein pyridine nucleotide cytochrome reductase family. Requires FAD as cofactor. Heme b is required as a cofactor.

It is found in the cytoplasm. It carries out the reaction 2 nitric oxide + NADPH + 2 O2 = 2 nitrate + NADP(+) + H(+). The catalysed reaction is 2 nitric oxide + NADH + 2 O2 = 2 nitrate + NAD(+) + H(+). In terms of biological role, is involved in NO detoxification in an aerobic process, termed nitric oxide dioxygenase (NOD) reaction that utilizes O(2) and NAD(P)H to convert NO to nitrate, which protects the fungus from various noxious nitrogen compounds. Therefore, plays a central role in the inducible response to nitrosative stress. In the presence of oxygen and NADH, it has NADH oxidase activity, which leads to the generation of superoxide and H(2)O(2). Under anaerobic conditions, it also exhibits nitric oxide reductase and FAD reductase activities. However, all these reactions are much lower than NOD activity. This chain is Flavohemoprotein (YHB1), found in Saccharomyces cerevisiae (strain ATCC 204508 / S288c) (Baker's yeast).